The sequence spans 174 residues: FMN reductase (NADH) RutF (174 aa).

The protein belongs to the non-flavoprotein flavin reductase family. RutF subfamily.

It carries out the reaction FMNH2 + NAD(+) = FMN + NADH + 2 H(+). In terms of biological role, catalyzes the reduction of FMN to FMNH2 which is used to reduce pyrimidine by RutA via the Rut pathway. The sequence is that of FMN reductase (NADH) RutF from Stutzerimonas stutzeri (strain A1501) (Pseudomonas stutzeri).